Consider the following 67-residue polypeptide: Large ribosomal subunit protein bL35 (67 aa).

Positions Met-1–Val-16 are enriched in basic residues. The interval Met-1–Val-22 is disordered.

Belongs to the bacterial ribosomal protein bL35 family.

The chain is Large ribosomal subunit protein bL35 from Methylibium petroleiphilum (strain ATCC BAA-1232 / LMG 22953 / PM1).